Reading from the N-terminus, the 156-residue chain is Small ribosomal subunit protein uS7 (156 aa).

It belongs to the universal ribosomal protein uS7 family. As to quaternary structure, part of the 30S ribosomal subunit. Contacts proteins S9 and S11.

In terms of biological role, one of the primary rRNA binding proteins, it binds directly to 16S rRNA where it nucleates assembly of the head domain of the 30S subunit. Is located at the subunit interface close to the decoding center, probably blocks exit of the E-site tRNA. The protein is Small ribosomal subunit protein uS7 of Shewanella frigidimarina (strain NCIMB 400).